We begin with the raw amino-acid sequence, 95 residues long: uncharacterized protein (95 aa).

The region spanning 2 to 92 (VREAAMLHIK…YTPFPTVEHF (91 aa)) is the ABM domain.

This is an uncharacterized protein from Bacillus subtilis (strain 168).